We begin with the raw amino-acid sequence, 209 residues long: Large ribosomal subunit protein uL3 (209 aa).

Residues 127–166 (NFGGGQRTHGQSDRLRAPGSIGGASDPSKTFKGTKMGGRM) are disordered.

This sequence belongs to the universal ribosomal protein uL3 family. As to quaternary structure, part of the 50S ribosomal subunit. Forms a cluster with proteins L14 and L19.

Functionally, one of the primary rRNA binding proteins, it binds directly near the 3'-end of the 23S rRNA, where it nucleates assembly of the 50S subunit. The protein is Large ribosomal subunit protein uL3 of Chlorobium phaeovibrioides (strain DSM 265 / 1930) (Prosthecochloris vibrioformis (strain DSM 265)).